The following is a 502-amino-acid chain: Probable cytosol aminopeptidase (502 aa).

Mn(2+) is bound by residues Lys-254 and Asp-259. Residue Lys-266 is part of the active site. Positions 277, 336, and 338 each coordinate Mn(2+). Residue Arg-340 is part of the active site.

It belongs to the peptidase M17 family. The cofactor is Mn(2+).

It is found in the cytoplasm. It carries out the reaction Release of an N-terminal amino acid, Xaa-|-Yaa-, in which Xaa is preferably Leu, but may be other amino acids including Pro although not Arg or Lys, and Yaa may be Pro. Amino acid amides and methyl esters are also readily hydrolyzed, but rates on arylamides are exceedingly low.. It catalyses the reaction Release of an N-terminal amino acid, preferentially leucine, but not glutamic or aspartic acids.. Functionally, presumably involved in the processing and regular turnover of intracellular proteins. Catalyzes the removal of unsubstituted N-terminal amino acids from various peptides. In Tropheryma whipplei (strain TW08/27) (Whipple's bacillus), this protein is Probable cytosol aminopeptidase.